The following is a 209-amino-acid chain: Mediator of RNA polymerase II transcription subunit 20 (209 aa).

It belongs to the Mediator complex subunit 20 family. As to quaternary structure, component of the Mediator complex.

It is found in the nucleus. Component of the Mediator complex, a coactivator involved in the regulated transcription of nearly all RNA polymerase II-dependent genes. Mediator functions as a bridge to convey information from gene-specific regulatory proteins to the basal RNA polymerase II transcription machinery. Mediator is recruited to promoters by direct interactions with regulatory proteins and serves as a scaffold for the assembly of a functional preinitiation complex with RNA polymerase II and the general transcription factors. In Eremothecium gossypii (strain ATCC 10895 / CBS 109.51 / FGSC 9923 / NRRL Y-1056) (Yeast), this protein is Mediator of RNA polymerase II transcription subunit 20 (SRB2).